A 225-amino-acid polypeptide reads, in one-letter code: Large ribosomal subunit protein bL25 (225 aa).

Residues 197–225 (PQREEQMEDTDTAAADEEGDKEEDADKQE) are disordered. Positions 202–225 (QMEDTDTAAADEEGDKEEDADKQE) are enriched in acidic residues.

The protein belongs to the bacterial ribosomal protein bL25 family. CTC subfamily. In terms of assembly, part of the 50S ribosomal subunit; part of the 5S rRNA/L5/L18/L25 subcomplex. Contacts the 5S rRNA. Binds to the 5S rRNA independently of L5 and L18.

Functionally, this is one of the proteins that binds to the 5S RNA in the ribosome where it forms part of the central protuberance. The polypeptide is Large ribosomal subunit protein bL25 (Dichelobacter nodosus (strain VCS1703A)).